A 22-amino-acid chain; its full sequence is thr operon leader peptide (22 aa).

The protein belongs to the thr operon leader peptide family.

In terms of biological role, this protein is involved in control of the biosynthesis of threonine. This is thr operon leader peptide from Klebsiella pneumoniae (strain 342).